A 282-amino-acid chain; its full sequence is Plant cysteine oxidase 3 (282 aa).

Positions 131, 133, and 202 each coordinate Fe cation.

Belongs to the cysteine dioxygenase family. The cofactor is Fe(2+).

The protein localises to the nucleus. It is found in the cytoplasm. It carries out the reaction L-cysteine + O2 = 3-sulfino-L-alanine + H(+). In terms of biological role, catalyzes the oxidation of N-terminal cysteine residues (N-Cys), thus preparing the protein for N-end rule pathway-mediated proteasomal degradation, upstream of the N-end rule enzymes ATE1, ATE2 and PRT6. Controls the preparation of the group VII ethylene response factor (ERF-VII) proteins for degradation via the 26S proteasome N-end rule pathway. Acts as an oxygen sensor that controls the stability of ERF-VII proteins, which are stabilized in flooding-induced hypoxia, and regulate transcriptional adaptation to these adverse conditions. This Arabidopsis thaliana (Mouse-ear cress) protein is Plant cysteine oxidase 3.